Here is a 332-residue protein sequence, read N- to C-terminus: Ferredoxin--NADP reductase (332 aa).

Residues aspartate 33, glutamine 41, tyrosine 46, alanine 86, isoleucine 121, aspartate 282, and serine 325 each contribute to the FAD site.

This sequence belongs to the ferredoxin--NADP reductase type 2 family. In terms of assembly, homodimer. It depends on FAD as a cofactor.

It carries out the reaction 2 reduced [2Fe-2S]-[ferredoxin] + NADP(+) + H(+) = 2 oxidized [2Fe-2S]-[ferredoxin] + NADPH. This chain is Ferredoxin--NADP reductase, found in Metallosphaera sedula (strain ATCC 51363 / DSM 5348 / JCM 9185 / NBRC 15509 / TH2).